The following is a 274-amino-acid chain: Proteasome subunit beta type-5-A (274 aa).

The propeptide at methionine 1–glycine 57 is removed in mature form. The Nucleophile role is filled by threonine 58.

It belongs to the peptidase T1B family. Component of the 20S core complex of the 26S proteasome. The 26S proteasome is composed of a core protease (CP), known as the 20S proteasome, capped at one or both ends by the 19S regulatory particle (RP/PA700). The 20S proteasome core is composed of 28 subunits that are arranged in four stacked rings, resulting in a barrel-shaped structure. The two end rings are each formed by seven alpha subunits, and the two central rings are each formed by seven beta subunits. The catalytic chamber with the active sites is on the inside of the barrel. As to expression, ubiquitous low levels, higher expression in siliques and flowers.

The protein localises to the cytoplasm. It is found in the nucleus. The catalysed reaction is Cleavage of peptide bonds with very broad specificity.. Functionally, the proteasome is a multicatalytic proteinase complex which is characterized by its ability to cleave peptides with Arg, Phe, Tyr, Leu, and Glu adjacent to the leaving group at neutral or slightly basic pH. The proteasome has an ATP-dependent proteolytic activity. This Arabidopsis thaliana (Mouse-ear cress) protein is Proteasome subunit beta type-5-A (PBE1).